The following is a 506-amino-acid chain: Probable cytosol aminopeptidase (506 aa).

The Mn(2+) site is built by lysine 278 and aspartate 283. The active site involves lysine 290. Mn(2+)-binding residues include aspartate 301, aspartate 360, and glutamate 362. Residue arginine 364 is part of the active site.

Belongs to the peptidase M17 family. Requires Mn(2+) as cofactor.

The protein localises to the cytoplasm. It catalyses the reaction Release of an N-terminal amino acid, Xaa-|-Yaa-, in which Xaa is preferably Leu, but may be other amino acids including Pro although not Arg or Lys, and Yaa may be Pro. Amino acid amides and methyl esters are also readily hydrolyzed, but rates on arylamides are exceedingly low.. It carries out the reaction Release of an N-terminal amino acid, preferentially leucine, but not glutamic or aspartic acids.. Functionally, presumably involved in the processing and regular turnover of intracellular proteins. Catalyzes the removal of unsubstituted N-terminal amino acids from various peptides. The polypeptide is Probable cytosol aminopeptidase (Ralstonia nicotianae (strain ATCC BAA-1114 / GMI1000) (Ralstonia solanacearum)).